We begin with the raw amino-acid sequence, 234 residues long: Segregation and condensation protein A (234 aa).

It belongs to the ScpA family. In terms of assembly, component of a cohesin-like complex composed of ScpA, ScpB and the Smc homodimer, in which ScpA and ScpB bind to the head domain of Smc. The presence of the three proteins is required for the association of the complex with DNA.

The protein resides in the cytoplasm. Its function is as follows. Participates in chromosomal partition during cell division. May act via the formation of a condensin-like complex containing Smc and ScpB that pull DNA away from mid-cell into both cell halves. This is Segregation and condensation protein A from Streptococcus pyogenes serotype M12 (strain MGAS2096).